Reading from the N-terminus, the 163-residue chain is Probable histone H2A.4 (163 aa).

2 disordered regions span residues 1–30 and 134–163; these read MEVGAKVPKKAGAGGRRGGGGPKKKPVSRS and SAAAKEAKEGKTPKSPKKATTKSPKKAAAA. The segment covering 12 to 21 has biased composition (gly residues); it reads GAGGRRGGGG. Positions 147 to 163 are enriched in basic residues; sequence KSPKKATTKSPKKAAAA. Short sequence motifs (SPKK motif) lie at residues 148-151 and 156-159; these read SPKK.

It belongs to the histone H2A family. In terms of assembly, the nucleosome is a histone octamer containing two molecules each of H2A, H2B, H3 and H4 assembled in one H3-H4 heterotetramer and two H2A-H2B heterodimers. The octamer wraps approximately 147 bp of DNA.

It is found in the nucleus. Its subcellular location is the chromosome. Its function is as follows. Core component of nucleosome. Nucleosomes wrap and compact DNA into chromatin, limiting DNA accessibility to the cellular machineries which require DNA as a template. Histones thereby play a central role in transcription regulation, DNA repair, DNA replication and chromosomal stability. DNA accessibility is regulated via a complex set of post-translational modifications of histones, also called histone code, and nucleosome remodeling. This chain is Probable histone H2A.4, found in Oryza sativa subsp. indica (Rice).